A 337-amino-acid chain; its full sequence is MIQHAIAKLLEGEDLSRAEAAQVMTEIADGGATPAQSGAFLAALRMKGETVEEIAGAADVMRQRADRVRVSRDVFIDTCGTGGDGRHTFNISTTAAFVAAGAGVCVAKHGNRAVSSRSGSADVLAALGVNVDADKETVERCIEEVGIGFLFAVRLHPAFKAIAGVRRELGVRTIFNLLGPLANPAGARHQVLGVYEARWVPVLGGVLAALGAAHAFVVHGEGLDEIAVTGMTHVCEVKDGAVERYTIRPEDLGLPRRDAAELAGGDAAANARIVTHVLEGQQGGPRDAVLANAAAALVCAGAATDLRDGVARAARSIDSGAAREKLRQLVAATTVPA.

Residues Gly80, 83 to 84, Thr88, 90 to 93, 108 to 116, and Ser120 each bind 5-phospho-alpha-D-ribose 1-diphosphate; these read GD, NIST, and KHGNRAVSS. Residue Gly80 coordinates anthranilate. Ser92 contributes to the Mg(2+) binding site. An anthranilate-binding site is contributed by Asn111. Arg166 is a binding site for anthranilate. Asp224 and Glu225 together coordinate Mg(2+).

This sequence belongs to the anthranilate phosphoribosyltransferase family. In terms of assembly, homodimer. The cofactor is Mg(2+).

The catalysed reaction is N-(5-phospho-beta-D-ribosyl)anthranilate + diphosphate = 5-phospho-alpha-D-ribose 1-diphosphate + anthranilate. It participates in amino-acid biosynthesis; L-tryptophan biosynthesis; L-tryptophan from chorismate: step 2/5. In terms of biological role, catalyzes the transfer of the phosphoribosyl group of 5-phosphorylribose-1-pyrophosphate (PRPP) to anthranilate to yield N-(5'-phosphoribosyl)-anthranilate (PRA). The polypeptide is Anthranilate phosphoribosyltransferase (Anaeromyxobacter dehalogenans (strain 2CP-C)).